We begin with the raw amino-acid sequence, 202 residues long: Protein GrpE (202 aa).

The segment covering 21–37 (EELKNEEVKEETHEHEH) has biased composition (basic and acidic residues). Positions 21–52 (EELKNEEVKEETHEHEHKHGGHTCCGKHGHKH) are disordered. Basic residues predominate over residues 38–51 (KHGGHTCCGKHGHK).

This sequence belongs to the GrpE family. Homodimer.

The protein resides in the cytoplasm. In terms of biological role, participates actively in the response to hyperosmotic and heat shock by preventing the aggregation of stress-denatured proteins, in association with DnaK and GrpE. It is the nucleotide exchange factor for DnaK and may function as a thermosensor. Unfolded proteins bind initially to DnaJ; upon interaction with the DnaJ-bound protein, DnaK hydrolyzes its bound ATP, resulting in the formation of a stable complex. GrpE releases ADP from DnaK; ATP binding to DnaK triggers the release of the substrate protein, thus completing the reaction cycle. Several rounds of ATP-dependent interactions between DnaJ, DnaK and GrpE are required for fully efficient folding. The chain is Protein GrpE from Fusobacterium nucleatum subsp. polymorphum (Fusobacterium polymorphum).